A 141-amino-acid polypeptide reads, in one-letter code: MARFLQTLLFLVIMVEFVSRRVEAWGSPQIVRPFEDIPKSYVYVQHALWYAMKEYNKASNDLYNFRVVDILKSQEQITDSLEYYLEVNIARTMCKKIAGDNENCLFQQDPKMKKMVFCIFIVSSKPWKFELKMLKKQCKDI.

Positions 1–24 are cleaved as a signal peptide; it reads MARFLQTLLFLVIMVEFVSRRVEA. Residues 76-80 are secondary area of contact; that stretch reads QITDS. Disulfide bonds link cysteine 94/cysteine 104 and cysteine 118/cysteine 138.

Belongs to the cystatin family. As to expression, expressed exclusively in testis. Found in spermatagonia, spermatocytes, round spermatids, elongating spermatids and spermatozoa.

It is found in the secreted. It localises to the cytoplasm. Its function is as follows. May perform a specialized role during sperm development and maturation. This chain is Cystatin-13, found in Mus musculus (Mouse).